We begin with the raw amino-acid sequence, 436 residues long: Bifunctional protein GlmU (436 aa).

Residues 1–225 (MNNNTSIIIL…EQNFMGINDK (225 aa)) are pyrophosphorylase. Residues 10 to 13 (LAAG), K24, Q76, and 83 to 84 (GT) contribute to the UDP-N-acetyl-alpha-D-glucosamine site. Position 104 (D104) interacts with Mg(2+). UDP-N-acetyl-alpha-D-glucosamine is bound by residues G137, E151, N166, and N223. N223 provides a ligand contact to Mg(2+). Positions 226 to 246 (FQLSIAEKIMQDEIKQNLMKA) are linker. The interval 247–436 (GVLMRMPESI…KFFGKDDVKK (190 aa)) is N-acetyltransferase. The UDP-N-acetyl-alpha-D-glucosamine site is built by R310 and K327. H338 acts as the Proton acceptor in catalysis. The UDP-N-acetyl-alpha-D-glucosamine site is built by Y341 and N352. Acetyl-CoA-binding positions include 361-362 (NY), S380, A398, and R415.

It in the N-terminal section; belongs to the N-acetylglucosamine-1-phosphate uridyltransferase family. This sequence in the C-terminal section; belongs to the transferase hexapeptide repeat family. Homotrimer. Mg(2+) serves as cofactor.

Its subcellular location is the cytoplasm. The enzyme catalyses alpha-D-glucosamine 1-phosphate + acetyl-CoA = N-acetyl-alpha-D-glucosamine 1-phosphate + CoA + H(+). It carries out the reaction N-acetyl-alpha-D-glucosamine 1-phosphate + UTP + H(+) = UDP-N-acetyl-alpha-D-glucosamine + diphosphate. Its pathway is nucleotide-sugar biosynthesis; UDP-N-acetyl-alpha-D-glucosamine biosynthesis; N-acetyl-alpha-D-glucosamine 1-phosphate from alpha-D-glucosamine 6-phosphate (route II): step 2/2. It functions in the pathway nucleotide-sugar biosynthesis; UDP-N-acetyl-alpha-D-glucosamine biosynthesis; UDP-N-acetyl-alpha-D-glucosamine from N-acetyl-alpha-D-glucosamine 1-phosphate: step 1/1. The protein operates within bacterial outer membrane biogenesis; LPS lipid A biosynthesis. In terms of biological role, catalyzes the last two sequential reactions in the de novo biosynthetic pathway for UDP-N-acetylglucosamine (UDP-GlcNAc). The C-terminal domain catalyzes the transfer of acetyl group from acetyl coenzyme A to glucosamine-1-phosphate (GlcN-1-P) to produce N-acetylglucosamine-1-phosphate (GlcNAc-1-P), which is converted into UDP-GlcNAc by the transfer of uridine 5-monophosphate (from uridine 5-triphosphate), a reaction catalyzed by the N-terminal domain. This chain is Bifunctional protein GlmU, found in Campylobacter concisus (strain 13826).